The chain runs to 267 residues: Tryptophan synthase alpha chain (267 aa).

Catalysis depends on proton acceptor residues E51 and D62.

Belongs to the TrpA family. As to quaternary structure, tetramer of two alpha and two beta chains.

It catalyses the reaction (1S,2R)-1-C-(indol-3-yl)glycerol 3-phosphate + L-serine = D-glyceraldehyde 3-phosphate + L-tryptophan + H2O. The protein operates within amino-acid biosynthesis; L-tryptophan biosynthesis; L-tryptophan from chorismate: step 5/5. Functionally, the alpha subunit is responsible for the aldol cleavage of indoleglycerol phosphate to indole and glyceraldehyde 3-phosphate. The chain is Tryptophan synthase alpha chain from Prochlorococcus marinus (strain SARG / CCMP1375 / SS120).